The primary structure comprises 245 residues: DNA repair protein RecO (245 aa).

This sequence belongs to the RecO family.

Functionally, involved in DNA repair and RecF pathway recombination. This chain is DNA repair protein RecO, found in Anaplasma phagocytophilum (strain HZ).